The sequence spans 704 residues: MALDVLTDLTKVRNIGIMAHIDAGKTTTTERILFYTGVNYKIGETHDGASTTDWMEQEQERGITITSAAVTCFWNGTQINIIDTPGHVDFTVEVERSLRVLDGAVAVFDGKEGVEPQSETVWRQADKYDVPRICFVNKMDKLGADFYFTVDTIVGRLGARPLVLQLPIGAENDFIGVVDLVEMRALVWPADSKGDTTMGAKYEVQEIPADLREKADEYRAKLIETVAETDDALLEKFFAGEELTVAEIKAGIRKLTVASEIYPVLCGSAFKNRGVQPMLDAVVDYLPSPLDVPAVEGHSVKDEEETITRAPDSSAPFAALAYKIATHPFFGKLIYVRVYSGKVTPGTQVINATKGKKERIGKLFQMHANKENPVDEATAGHIYAFIGLKDVTTGDTLSDIANPVVLESMTFPDPVIEVAIEPKTKGDQEKLSTAIQKLAEEDPTFQVMLDQETGQTVIKGMGELHLDILVDRMRREFKVEANVGKPQVAYRETIRRKVEKVEYVHKKQTGGSGQFAKVQMTFEPLDTAEGELYEFVNSVTGGRIPREYIPSVDHGIQDAMQAGVLAGYPLVGVKATLLDGAYHEVDSSEMAFKIAGSMVLKEGVRRADPVLLEPLMDVEVRTPEEYMGDVIGDLNSRRGHIQSMQDASGVKVVRALVPLSELFGYIGDLRSKTQGRAVYSMQFDSYAEVPRNVAEEIIKKTRGE.

The 281-residue stretch at 10–290 (TKVRNIGIMA…AVVDYLPSPL (281 aa)) folds into the tr-type G domain. GTP is bound by residues 19–26 (AHIDAGKT), 83–87 (DTPGH), and 137–140 (NKMD).

Belongs to the TRAFAC class translation factor GTPase superfamily. Classic translation factor GTPase family. EF-G/EF-2 subfamily.

The protein localises to the cytoplasm. Functionally, catalyzes the GTP-dependent ribosomal translocation step during translation elongation. During this step, the ribosome changes from the pre-translocational (PRE) to the post-translocational (POST) state as the newly formed A-site-bound peptidyl-tRNA and P-site-bound deacylated tRNA move to the P and E sites, respectively. Catalyzes the coordinated movement of the two tRNA molecules, the mRNA and conformational changes in the ribosome. The protein is Elongation factor G of Beutenbergia cavernae (strain ATCC BAA-8 / DSM 12333 / CCUG 43141 / JCM 11478 / NBRC 16432 / NCIMB 13614 / HKI 0122).